A 473-amino-acid polypeptide reads, in one-letter code: Photosystem II CP43 reaction center protein (473 aa).

Residues 1-14 (MKTLYSRRRFYHVE) constitute a propeptide that is removed on maturation. Thr-15 is modified (N-acetylthreonine). The residue at position 15 (Thr-15) is a Phosphothreonine. The next 5 membrane-spanning stretches (helical) occupy residues 69 to 93 (LFEV…PHLA), 134 to 155 (LLGP…KDRN), 178 to 200 (KALY…RKIT), 255 to 275 (KPFA…LSYS), and 291 to 312 (WFNN…ASQA). Position 367 (Glu-367) interacts with [CaMn4O5] cluster. A helical membrane pass occupies residues 447-471 (RARAAAAGFEKGIDRDFEPVLSMTP).

It belongs to the PsbB/PsbC family. PsbC subfamily. As to quaternary structure, PSII is composed of 1 copy each of membrane proteins PsbA, PsbB, PsbC, PsbD, PsbE, PsbF, PsbH, PsbI, PsbJ, PsbK, PsbL, PsbM, PsbT, PsbX, PsbY, PsbZ, Psb30/Ycf12, at least 3 peripheral proteins of the oxygen-evolving complex and a large number of cofactors. It forms dimeric complexes. Binds multiple chlorophylls and provides some of the ligands for the Ca-4Mn-5O cluster of the oxygen-evolving complex. It may also provide a ligand for a Cl- that is required for oxygen evolution. PSII binds additional chlorophylls, carotenoids and specific lipids. serves as cofactor.

It localises to the plastid. Its subcellular location is the chloroplast thylakoid membrane. Functionally, one of the components of the core complex of photosystem II (PSII). It binds chlorophyll and helps catalyze the primary light-induced photochemical processes of PSII. PSII is a light-driven water:plastoquinone oxidoreductase, using light energy to abstract electrons from H(2)O, generating O(2) and a proton gradient subsequently used for ATP formation. This Solanum bulbocastanum (Wild potato) protein is Photosystem II CP43 reaction center protein.